We begin with the raw amino-acid sequence, 885 residues long: Alanine--tRNA ligase (885 aa).

Residues His-564, His-568, Cys-676, and His-680 each contribute to the Zn(2+) site.

This sequence belongs to the class-II aminoacyl-tRNA synthetase family. It depends on Zn(2+) as a cofactor.

The protein resides in the cytoplasm. It catalyses the reaction tRNA(Ala) + L-alanine + ATP = L-alanyl-tRNA(Ala) + AMP + diphosphate. Functionally, catalyzes the attachment of alanine to tRNA(Ala) in a two-step reaction: alanine is first activated by ATP to form Ala-AMP and then transferred to the acceptor end of tRNA(Ala). Also edits incorrectly charged Ser-tRNA(Ala) and Gly-tRNA(Ala) via its editing domain. This Brucella ovis (strain ATCC 25840 / 63/290 / NCTC 10512) protein is Alanine--tRNA ligase.